The primary structure comprises 275 residues: Probable ABC transporter permease protein PH1216 (275 aa).

A run of 6 helical transmembrane segments spans residues 10 to 30, 73 to 93, 105 to 125, 137 to 157, 181 to 203, and 241 to 261; these read LLYIVLIFLAAWYLLPIWSAI, IFTTFATIFSTILGSIAGFTI, LLALISFGIFLPYQSILIPLV, ILGLILTHTAYGIPITTLLFT, IYTKVILPLSKAPFVVTGIYQFT, and IQMAGALIVALPTLLIMIALG. One can recognise an ABC transmembrane type-1 domain in the interval 68–260; it reads ILNSLIFTTF…LPTLLIMIAL (193 aa).

This sequence belongs to the binding-protein-dependent transport system permease family. MalFG subfamily.

The protein localises to the cell membrane. Its function is as follows. Probably part of a binding-protein-dependent transport system PH1214/15/16. Probably responsible for the translocation of the substrate across the membrane. The polypeptide is Probable ABC transporter permease protein PH1216 (Pyrococcus horikoshii (strain ATCC 700860 / DSM 12428 / JCM 9974 / NBRC 100139 / OT-3)).